A 477-amino-acid chain; its full sequence is FAD-dependent monooxygenase paxM (477 aa).

A helical transmembrane segment spans residues 4–24; that stretch reads AEFQVIIVGGSIGGLTLAHCL. Residues glutamate 35, glycine 49, and arginine 108 each coordinate FAD. Residue arginine 195 is part of the active site. Residues aspartate 308 and alanine 321 each coordinate FAD. Residues 446–466 traverse the membrane as a helical segment; it reads LMIYLFGLTIVYTSLTMMFDL.

Belongs to the paxM FAD-dependent monooxygenase family. It depends on FAD as a cofactor.

It localises to the membrane. It functions in the pathway secondary metabolite biosynthesis. Its function is as follows. FAD-dependent monooxygenase; part of the gene cluster that mediates the biosynthesis of paxilline, a mycotoxin that acts as an inhibitor of mammalian maxi-K channels. PaxG, the geranylgeranyl diphosphate (GGPP) synthase is proposed to catalyze the first step in paxilline biosynthesis. Condensation of indole-3-glycerol phosphate with GGPP by paxC then forms 3-geranylgeranylindole (3-GGI), followed by epoxidation and cyclization of this intermediate (by paxM and paxB) to form paspaline. Paspaline is subsequently converted to 13-desoxypaxilline by paxP, the latter being then converted to paxilline by paxQ. Finally paxilline can be mono- and di-prenylated by paxD. In Penicillium paxilli, this protein is FAD-dependent monooxygenase paxM.